The sequence spans 360 residues: 3-isopropylmalate dehydrogenase (360 aa).

76–89 (GPKWDKIERDIRPE) provides a ligand contact to NAD(+). Substrate is bound by residues arginine 96, arginine 106, arginine 134, and aspartate 224. Residues aspartate 224, aspartate 248, and aspartate 252 each coordinate Mg(2+). Residue 282–294 (GSAPDIAGQGIAN) coordinates NAD(+).

It belongs to the isocitrate and isopropylmalate dehydrogenases family. LeuB type 1 subfamily. Homodimer. Requires Mg(2+) as cofactor. Mn(2+) serves as cofactor.

The protein resides in the cytoplasm. It catalyses the reaction (2R,3S)-3-isopropylmalate + NAD(+) = 4-methyl-2-oxopentanoate + CO2 + NADH. Its pathway is amino-acid biosynthesis; L-leucine biosynthesis; L-leucine from 3-methyl-2-oxobutanoate: step 3/4. Catalyzes the oxidation of 3-carboxy-2-hydroxy-4-methylpentanoate (3-isopropylmalate) to 3-carboxy-4-methyl-2-oxopentanoate. The product decarboxylates to 4-methyl-2 oxopentanoate. This is 3-isopropylmalate dehydrogenase from Pseudomonas fluorescens (strain ATCC BAA-477 / NRRL B-23932 / Pf-5).